The chain runs to 498 residues: Glycerol kinase (498 aa).

T12 provides a ligand contact to ADP. T12, T13, and S14 together coordinate ATP. T12 is a binding site for sn-glycerol 3-phosphate. R16 serves as a coordination point for ADP. Residues R82, E83, Y134, and D244 each contribute to the sn-glycerol 3-phosphate site. Residues R82, E83, Y134, D244, and Q245 each contribute to the glycerol site. ADP contacts are provided by T266 and G310. ATP is bound by residues T266, G310, Q314, and G411. Residues G411 and N415 each contribute to the ADP site.

It belongs to the FGGY kinase family.

The enzyme catalyses glycerol + ATP = sn-glycerol 3-phosphate + ADP + H(+). It participates in polyol metabolism; glycerol degradation via glycerol kinase pathway; sn-glycerol 3-phosphate from glycerol: step 1/1. Its activity is regulated as follows. Inhibited by fructose 1,6-bisphosphate (FBP). Key enzyme in the regulation of glycerol uptake and metabolism. Catalyzes the phosphorylation of glycerol to yield sn-glycerol 3-phosphate. The polypeptide is Glycerol kinase (Roseiflexus sp. (strain RS-1)).